The sequence spans 396 residues: Mannonate dehydratase (396 aa).

It belongs to the mannonate dehydratase family. Requires Fe(2+) as cofactor. It depends on Mn(2+) as a cofactor.

The catalysed reaction is D-mannonate = 2-dehydro-3-deoxy-D-gluconate + H2O. It functions in the pathway carbohydrate metabolism; pentose and glucuronate interconversion. Its function is as follows. Catalyzes the dehydration of D-mannonate. In Serratia proteamaculans (strain 568), this protein is Mannonate dehydratase.